Reading from the N-terminus, the 136-residue chain is Nucleoside diphosphate kinase (136 aa).

ATP contacts are provided by Lys10, Phe58, Arg86, Thr92, Arg104, and Asn114. His117 (pros-phosphohistidine intermediate) is an active-site residue.

This sequence belongs to the NDK family. As to quaternary structure, homohexamer. Mg(2+) is required as a cofactor.

It localises to the cytoplasm. It catalyses the reaction a 2'-deoxyribonucleoside 5'-diphosphate + ATP = a 2'-deoxyribonucleoside 5'-triphosphate + ADP. It carries out the reaction a ribonucleoside 5'-diphosphate + ATP = a ribonucleoside 5'-triphosphate + ADP. Its function is as follows. Major role in the synthesis of nucleoside triphosphates other than ATP. The ATP gamma phosphate is transferred to the NDP beta phosphate via a ping-pong mechanism, using a phosphorylated active-site intermediate. The protein is Nucleoside diphosphate kinase of Mycobacterium bovis (strain ATCC BAA-935 / AF2122/97).